The chain runs to 693 residues: Polyribonucleotide nucleotidyltransferase (693 aa).

Residues Asp-489 and Asp-495 each contribute to the Mg(2+) site. Positions 556-615 constitute a KH domain; sequence PQIHIMNVNPAKIKDVVGRGGSVVKGIVEKTGAQIDTSDSGEVKIFAKDKRSLDLAKSMV. The region spanning 625–693 is the S1 motif domain; that stretch reads GQIYKGKIVK…GRVKLSLVAR (69 aa).

Belongs to the polyribonucleotide nucleotidyltransferase family. As to quaternary structure, component of the RNA degradosome, which is a multiprotein complex involved in RNA processing and mRNA degradation. It depends on Mg(2+) as a cofactor.

It is found in the cytoplasm. The enzyme catalyses RNA(n+1) + phosphate = RNA(n) + a ribonucleoside 5'-diphosphate. In terms of biological role, involved in mRNA degradation. Catalyzes the phosphorolysis of single-stranded polyribonucleotides processively in the 3'- to 5'-direction. The sequence is that of Polyribonucleotide nucleotidyltransferase from Francisella philomiragia subsp. philomiragia (strain ATCC 25017 / CCUG 19701 / FSC 153 / O#319-036).